Consider the following 459-residue polypeptide: Ribulose bisphosphate carboxylase large chain (459 aa).

The residue at position 4 (lysine 4) is an N6,N6,N6-trimethyllysine. Residues asparagine 113 and threonine 163 each contribute to the substrate site. Residue lysine 165 is the Proton acceptor of the active site. Lysine 167 lines the substrate pocket. Positions 191, 193, and 194 each coordinate Mg(2+). N6-carboxylysine is present on lysine 191. Histidine 284 (proton acceptor) is an active-site residue. Substrate-binding residues include arginine 285, histidine 317, and serine 369.

It belongs to the RuBisCO large chain family. Type I subfamily. As to quaternary structure, heterohexadecamer of 8 large chains and 8 small chains; disulfide-linked. The disulfide link is formed within the large subunit homodimers. Requires Mg(2+) as cofactor. Post-translationally, the disulfide bond which can form in the large chain dimeric partners within the hexadecamer appears to be associated with oxidative stress and protein turnover.

It is found in the plastid. It localises to the chloroplast. The enzyme catalyses 2 (2R)-3-phosphoglycerate + 2 H(+) = D-ribulose 1,5-bisphosphate + CO2 + H2O. It catalyses the reaction D-ribulose 1,5-bisphosphate + O2 = 2-phosphoglycolate + (2R)-3-phosphoglycerate + 2 H(+). Its function is as follows. RuBisCO catalyzes two reactions: the carboxylation of D-ribulose 1,5-bisphosphate, the primary event in carbon dioxide fixation, as well as the oxidative fragmentation of the pentose substrate in the photorespiration process. Both reactions occur simultaneously and in competition at the same active site. The protein is Ribulose bisphosphate carboxylase large chain of Morus alba (White mulberry).